The chain runs to 467 residues: Ethanolamine-phosphate phospho-lyase homolog 1 (467 aa).

Lys307 is modified (N6-(pyridoxal phosphate)lysine).

This sequence belongs to the class-III pyridoxal-phosphate-dependent aminotransferase family. Requires pyridoxal 5'-phosphate as cofactor.

This is Ethanolamine-phosphate phospho-lyase homolog 1 from Caenorhabditis elegans.